The sequence spans 445 residues: Tubulin beta-4 chain (445 aa).

The GTP site is built by glutamine 11, glutamate 69, serine 138, glycine 142, threonine 143, glycine 144, asparagine 204, and asparagine 226. Glutamate 69 is a binding site for Mg(2+). The tract at residues 421-445 (EYQQYQDATADEEYDEEEEEERDAE) is disordered. Positions 429–445 (TADEEYDEEEEEERDAE) are enriched in acidic residues.

This sequence belongs to the tubulin family. Dimer of alpha and beta chains. A typical microtubule is a hollow water-filled tube with an outer diameter of 25 nm and an inner diameter of 15 nM. Alpha-beta heterodimers associate head-to-tail to form protofilaments running lengthwise along the microtubule wall with the beta-tubulin subunit facing the microtubule plus end conferring a structural polarity. Microtubules usually have 13 protofilaments but different protofilament numbers can be found in some organisms and specialized cells. Requires Mg(2+) as cofactor.

It is found in the cytoplasm. It localises to the cytoskeleton. In terms of biological role, tubulin is the major constituent of microtubules, a cylinder consisting of laterally associated linear protofilaments composed of alpha- and beta-tubulin heterodimers. Microtubules grow by the addition of GTP-tubulin dimers to the microtubule end, where a stabilizing cap forms. Below the cap, tubulin dimers are in GDP-bound state, owing to GTPase activity of alpha-tubulin. This is Tubulin beta-4 chain (TUBB4) from Triticum aestivum (Wheat).